Here is a 260-residue protein sequence, read N- to C-terminus: MLLAIDSGNTNIVFAVYDGDTLRGEWRASTDSERTADELGVWLTQLLTIEGLNRLDISAAIIASVVPAMVFGLKTLCRRYFKCEPLVVGDEGVDLGLSILLDRPEEVGADRLVNAVAAHKYYKGPLIVIDFGTATTFDVVDADGNYCGGAISPGINLSLEALHMAAAKLPRVAIGRPRQVIGRATVPAMQSGIFWGYVGLIEGLVKRIKEEFGSDMLVLATGGLAPLFAEATKVINALDADLTLRGLLEIHRRNSTPVRG.

An ATP-binding site is contributed by 6 to 13 (DSGNTNIV). 108–111 (GADR) is a binding site for substrate. Residue D110 is the Proton acceptor of the active site. K(+) is bound at residue D130. An ATP-binding site is contributed by T133. A substrate-binding site is contributed by T185.

The protein belongs to the type III pantothenate kinase family. In terms of assembly, homodimer. NH4(+) serves as cofactor. The cofactor is K(+).

The protein localises to the cytoplasm. It carries out the reaction (R)-pantothenate + ATP = (R)-4'-phosphopantothenate + ADP + H(+). It participates in cofactor biosynthesis; coenzyme A biosynthesis; CoA from (R)-pantothenate: step 1/5. In terms of biological role, catalyzes the phosphorylation of pantothenate (Pan), the first step in CoA biosynthesis. In Paramagnetospirillum magneticum (strain ATCC 700264 / AMB-1) (Magnetospirillum magneticum), this protein is Type III pantothenate kinase.